Here is a 129-residue protein sequence, read N- to C-terminus: Small ribosomal subunit protein bS6 (129 aa).

The tract at residues 100–129 (SIMLKQKEERAPRREERSEAKPEAKSEAAE) is disordered. The span at 104-129 (KQKEERAPRREERSEAKPEAKSEAAE) shows a compositional bias: basic and acidic residues.

Belongs to the bacterial ribosomal protein bS6 family.

In terms of biological role, binds together with bS18 to 16S ribosomal RNA. This is Small ribosomal subunit protein bS6 from Vibrio parahaemolyticus serotype O3:K6 (strain RIMD 2210633).